The chain runs to 457 residues: DDB1- and CUL4-associated factor 10 (457 aa).

4 WD repeats span residues 65–104, 108–146, 150–189, and 195–234; these read RTHG…HIKT, AHED…SKAC, GHTS…EDGC, and FHTR…KSLE. Low complexity predominate over residues 246–265; that stretch reads TASTSDMTSTSSETRPSSSP. The segment at 246–304 is disordered; it reads TASTSDMTSTSSETRPSSSPCHNSDSGPLFEKHMSRSSQREGTSPRNSLEVLTPEVPGE. The span at 281 to 292 shows a compositional bias: polar residues; sequence RSSQREGTSPRN. 3 WD repeats span residues 306-346, 368-406, and 424-457; these read DRGN…QEGT, VGRG…KELV, and SHKD…QPKF.

This sequence belongs to the WD repeat DCAF10 family.

It functions in the pathway protein modification; protein ubiquitination. In terms of biological role, may function as a substrate receptor for CUL4-DDB1 E3 ubiquitin-protein ligase complex. The polypeptide is DDB1- and CUL4-associated factor 10 (dcaf10) (Xenopus laevis (African clawed frog)).